Reading from the N-terminus, the 239-residue chain is MPINKFSARSLDNDVPNKPLIFVMEGRYQNWIKPIMLLECLEIDYDAACIDGPTTRTDWFTRLHPQRYVPAMIDVEDGQRVSSWDSSQMLQYLSNKYDAKRMWNGHNAAENLEICNWLTFETASLGPTAKYWVWYALRQGEEQNPKAQQKMYNDLRVQYSILDKHLAQPGQNWVGLKDRPTIADLAIYPFADDPTMARMGIDKKDFPSLKAWSEALSKVPGVAKAYAELDSRKEIAIGA.

The GST N-terminal domain occupies 18 to 101 (KPLIFVMEGR…YLSNKYDAKR (84 aa)). One can recognise a GST C-terminal domain in the interval 107 to 237 (NAAENLEICN…ELDSRKEIAI (131 aa)).

This sequence belongs to the GST superfamily.

The enzyme catalyses RX + glutathione = an S-substituted glutathione + a halide anion + H(+). It participates in mycotoxin biosynthesis. Its function is as follows. Glutathione S-transferase; part of the gene cluster that mediates the biosynthesis of 11'-deoxyverticillin A, one of the dimeric epipolythiodioxopiperazines (ETPs) from the verticillin family that act as mycotoxins. 11'-deoxyverticillin A is required for normal conidiation. The nonribosomal peptide synthetase verP is speculated to be responsible for condensation of amino acids to form the carbon skeleton of verticillin, whereas the cluster-specific tailoring enzymes are involved in further modifications leading to the production of 11'-deoxyverticillin A. The polypeptide is Glutathione S-transferase verG (Clonostachys rogersoniana).